The primary structure comprises 415 residues: Tyrosine--tRNA ligase (415 aa).

The 'HIGH' region motif lies at 54–63 (PTGSNIHLGH). The short motif at 248–252 (KMSKT) is the 'KMSKS' region element. Lys251 lines the ATP pocket. Positions 351-415 (AKAFYLMSAV…GKKTFRRLTA (65 aa)) constitute an S4 RNA-binding domain.

This sequence belongs to the class-I aminoacyl-tRNA synthetase family. TyrS type 2 subfamily. Homodimer.

Its subcellular location is the cytoplasm. The catalysed reaction is tRNA(Tyr) + L-tyrosine + ATP = L-tyrosyl-tRNA(Tyr) + AMP + diphosphate + H(+). Catalyzes the attachment of tyrosine to tRNA(Tyr) in a two-step reaction: tyrosine is first activated by ATP to form Tyr-AMP and then transferred to the acceptor end of tRNA(Tyr). This is Tyrosine--tRNA ligase from Synechococcus sp. (strain CC9902).